Consider the following 249-residue polypeptide: Putative [LysW]-aminoadipate/[LysW]-glutamate kinase (249 aa).

Positions 64 and 166 each coordinate substrate.

This sequence belongs to the acetylglutamate kinase family. LysZ subfamily.

The protein resides in the cytoplasm. It carries out the reaction [amino-group carrier protein]-C-terminal-N-(1,4-dicarboxybutan-1-yl)-L-glutamine + ATP = [amino-group carrier protein]-C-terminal-N-(1-carboxy-5-phosphooxy-5-oxopentan-1-yl)-L-glutamine + ADP. It catalyses the reaction [amino-group carrier protein]-C-terminal-gamma-(L-glutamyl)-L-glutamate + ATP = [amino-group carrier protein]-C-terminal-gamma-(5-phospho-L-glutamyl)-L-glutamate + ADP. The protein operates within amino-acid biosynthesis; L-lysine biosynthesis via AAA pathway; L-lysine from L-alpha-aminoadipate (Thermus route): step 2/5. Its pathway is amino-acid biosynthesis; L-arginine biosynthesis. In terms of biological role, involved in both the arginine and lysine biosynthetic pathways. Phosphorylates the LysW-bound precursors glutamate (for arginine biosynthesis), respectively alpha-aminoadipate (for lysine biosynthesis). The protein is Putative [LysW]-aminoadipate/[LysW]-glutamate kinase of Pyrococcus horikoshii (strain ATCC 700860 / DSM 12428 / JCM 9974 / NBRC 100139 / OT-3).